A 287-amino-acid polypeptide reads, in one-letter code: Light-independent protochlorophyllide reductase iron-sulfur ATP-binding protein (287 aa).

Residues 10–15 (GIGKST) and K39 contribute to the ATP site. S14 contributes to the Mg(2+) binding site. The [4Fe-4S] cluster site is built by C95 and C129. 180–181 (NR) serves as a coordination point for ATP.

Belongs to the NifH/BchL/ChlL family. In terms of assembly, homodimer. Protochlorophyllide reductase is composed of three subunits; ChlL, ChlN and ChlB. It depends on [4Fe-4S] cluster as a cofactor.

The protein localises to the plastid. It is found in the chloroplast. It catalyses the reaction chlorophyllide a + oxidized 2[4Fe-4S]-[ferredoxin] + 2 ADP + 2 phosphate = protochlorophyllide a + reduced 2[4Fe-4S]-[ferredoxin] + 2 ATP + 2 H2O. It participates in porphyrin-containing compound metabolism; chlorophyll biosynthesis (light-independent). In terms of biological role, component of the dark-operative protochlorophyllide reductase (DPOR) that uses Mg-ATP and reduced ferredoxin to reduce ring D of protochlorophyllide (Pchlide) to form chlorophyllide a (Chlide). This reaction is light-independent. The L component serves as a unique electron donor to the NB-component of the complex, and binds Mg-ATP. This Nephroselmis olivacea (Green alga) protein is Light-independent protochlorophyllide reductase iron-sulfur ATP-binding protein.